A 379-amino-acid chain; its full sequence is Lipoyl synthase 1, mitochondrial (379 aa).

[4Fe-4S] cluster is bound by residues Cys-106, Cys-111, Cys-117, Cys-137, Cys-141, Cys-144, and Ser-352. Positions 122 to 341 (EHGTQTATIM…EERGNELGFL (220 aa)) constitute a Radical SAM core domain.

Belongs to the radical SAM superfamily. Lipoyl synthase family. The cofactor is [4Fe-4S] cluster.

The protein resides in the mitochondrion. It catalyses the reaction [[Fe-S] cluster scaffold protein carrying a second [4Fe-4S](2+) cluster] + N(6)-octanoyl-L-lysyl-[protein] + 2 oxidized [2Fe-2S]-[ferredoxin] + 2 S-adenosyl-L-methionine + 4 H(+) = [[Fe-S] cluster scaffold protein] + N(6)-[(R)-dihydrolipoyl]-L-lysyl-[protein] + 4 Fe(3+) + 2 hydrogen sulfide + 2 5'-deoxyadenosine + 2 L-methionine + 2 reduced [2Fe-2S]-[ferredoxin]. Its pathway is protein modification; protein lipoylation via endogenous pathway; protein N(6)-(lipoyl)lysine from octanoyl-[acyl-carrier-protein]: step 2/2. In terms of biological role, catalyzes the radical-mediated insertion of two sulfur atoms into the C-6 and C-8 positions of the octanoyl moiety bound to the lipoyl domains of lipoate-dependent enzymes, thereby converting the octanoylated domains into lipoylated derivatives. The polypeptide is Lipoyl synthase 1, mitochondrial (Drosophila yakuba (Fruit fly)).